We begin with the raw amino-acid sequence, 325 residues long: Ribosomal RNA small subunit methyltransferase H (325 aa).

The tract at residues 1–28 (MTASQPLDQADQDSESSSAGSSAAETEH) is disordered. Over residues 15-24 (ESSSAGSSAA) the composition is skewed to low complexity. S-adenosyl-L-methionine is bound by residues 56 to 58 (GGH), Asp-82, Tyr-110, Asp-131, and Gln-138. Residues 303 to 325 (TDEEVQANPRSRSAKLRVAKRVE) form a disordered region. A compositionally biased stretch (basic residues) spans 314-325 (RSAKLRVAKRVE).

The protein belongs to the methyltransferase superfamily. RsmH family.

Its subcellular location is the cytoplasm. The catalysed reaction is cytidine(1402) in 16S rRNA + S-adenosyl-L-methionine = N(4)-methylcytidine(1402) in 16S rRNA + S-adenosyl-L-homocysteine + H(+). Its function is as follows. Specifically methylates the N4 position of cytidine in position 1402 (C1402) of 16S rRNA. The sequence is that of Ribosomal RNA small subunit methyltransferase H from Rhodopirellula baltica (strain DSM 10527 / NCIMB 13988 / SH1).